Consider the following 61-residue polypeptide: Large ribosomal subunit protein bL32 (61 aa).

A compositionally biased stretch (basic residues) spans 1-16 (MAVPRRKTSPSRRGMR). The disordered stretch occupies residues 1–61 (MAVPRRKTSP…RQVLKVKKED (61 aa)). A compositionally biased stretch (basic and acidic residues) spans 17 to 44 (RSADALKKPTYVEDKDSGELRRPHHLDL).

Belongs to the bacterial ribosomal protein bL32 family.

The polypeptide is Large ribosomal subunit protein bL32 (Afipia carboxidovorans (strain ATCC 49405 / DSM 1227 / KCTC 32145 / OM5) (Oligotropha carboxidovorans)).